Consider the following 300-residue polypeptide: Protoheme IX farnesyltransferase (300 aa).

9 helical membrane passes run 20-40 (ITKA…YLLG), 49-69 (WSVL…SNAY), 97-117 (VTAL…LYTI), 122-142 (AMFA…LKTV), 145-165 (LSVF…WVAA), 176-196 (LFLI…WFLY), 217-237 (ALQV…PVLG), 242-262 (LFIS…MLFY), and 278-298 (LMLV…VDKF).

This sequence belongs to the UbiA prenyltransferase family. Protoheme IX farnesyltransferase subfamily.

The protein localises to the cell inner membrane. The catalysed reaction is heme b + (2E,6E)-farnesyl diphosphate + H2O = Fe(II)-heme o + diphosphate. It participates in porphyrin-containing compound metabolism; heme O biosynthesis; heme O from protoheme: step 1/1. Converts heme B (protoheme IX) to heme O by substitution of the vinyl group on carbon 2 of heme B porphyrin ring with a hydroxyethyl farnesyl side group. This Flavobacterium johnsoniae (strain ATCC 17061 / DSM 2064 / JCM 8514 / BCRC 14874 / CCUG 350202 / NBRC 14942 / NCIMB 11054 / UW101) (Cytophaga johnsonae) protein is Protoheme IX farnesyltransferase.